The chain runs to 267 residues: Putative methylsterol monooxygenase DDB_G0270946 (267 aa).

3 helical membrane-spanning segments follow: residues 31-51 (FIAH…ADFI), 72-92 (YCAI…MYIF), and 110-130 (IPYL…YFYW). The Fatty acid hydroxylase domain occupies 119-249 (SSFIIEDFYF…FTYLDKIFGT (131 aa)). Residues 132 to 136 (HRALH) carry the Histidine box-1 motif. Residues 145–149 (HKVHH) carry the Histidine box-2 motif. The short motif at 224 to 230 (FHDYHHE) is the Histidine box-3 element.

The protein belongs to the sterol desaturase family. Requires Fe cation as cofactor.

The protein localises to the endoplasmic reticulum membrane. The catalysed reaction is 4,4-dimethyl-5alpha-cholest-7-en-3beta-ol + 6 Fe(II)-[cytochrome b5] + 3 O2 + 5 H(+) = 4alpha-carboxy-4beta-methyl-5alpha-cholest-7-ene-3beta-ol + 6 Fe(III)-[cytochrome b5] + 4 H2O. It participates in steroid biosynthesis; zymosterol biosynthesis; zymosterol from lanosterol: step 3/6. The polypeptide is Putative methylsterol monooxygenase DDB_G0270946 (Dictyostelium discoideum (Social amoeba)).